We begin with the raw amino-acid sequence, 109 residues long: uncharacterized protein (109 aa).

A helical membrane pass occupies residues 26 to 48 (VTSIMTVSDINYLLLYLIILLTL).

It is found in the membrane. This is an uncharacterized protein from Saccharomyces cerevisiae (strain ATCC 204508 / S288c) (Baker's yeast).